The following is a 540-amino-acid chain: MVRTDGHTLSEKRNYQVTNSMFGASRKKFVEGVDSDYHDENMYYSQSSMFPHRSEKDMLASPSTSGQLSQFGASLYGQQSALGLPMRGMSNNTPQLNRSLSQGTQLPSHVTPTTGVPTMSLHTPPSPSRGILPMNPRNMMNHSQVGQGIGIPSRTNSMSSSGLGSPNRSSPSIICMPKQQPSRQPFTVNSMSGFGMNRNQAFGMNNSLSSNIFNGTDGSENVTGLDLSDFPALADRNRREGSGNPTPLINPLAGRAPYVGMVTKPANEQSQDFSIHNEDFPALPGSSYKDPTSSNDDSKSNLNTSGKTTSSTDGPKFPGDKSSTTQNNNQQKKGIQVLPDGRVTNIPQGMVTDQFGMIGLLTFIRAAETDPGMVHLALGSDLTTLGLNLNSPENLYPKFASPWASSPCRPQDIDFHVPSEYLTNIHIRDKLAAIKLGRYGEDLLFYLYYMNGGDVLQLLAAVELFNRDWRYHKEERVWITRAPGMEPTMKTNTYERGTYYFFDCLNWRKVAKEFHLEYDKLEERPHLPSTFNYNPAQQAF.

Phosphothreonine is present on Thr-93. Over residues Leu-96–Thr-123 the composition is skewed to polar residues. The segment at Leu-96–Ser-126 is disordered. Phosphoserine is present on residues Ser-126, Ser-157, Ser-165, Ser-169, Ser-242, and Ser-274. The tract at residues His-276–Arg-342 is disordered. 2 stretches are compositionally biased toward polar residues: residues Lys-289–Asp-313 and Lys-321–Lys-333. A repressor domain region spans residues Gly-437–Phe-540.

The protein belongs to the CNOT2/3/5 family. Component of the CCR4-NOT complex; distinct complexes seem to exist that differ in the participation of probably mutually exclusive catalytic subunits. In the complex interacts directly with CNOT3. Interacts with NCOR1, NCOR2. HDAC3 and GPS2. Ubiquitous. Highly expressed in brain, heart, thymus, spleen, kidney, liver, small intestine, placenta, lung and peripheral blood leukocytes.

Its subcellular location is the cytoplasm. The protein localises to the nucleus. In terms of biological role, component of the CCR4-NOT complex which is one of the major cellular mRNA deadenylases and is linked to various cellular processes including bulk mRNA degradation, miRNA-mediated repression, translational repression during translational initiation and general transcription regulation. Additional complex functions may be a consequence of its influence on mRNA expression. Required for the CCR4-NOT complex structural integrity. Can repress transcription and may link the CCR4-NOT complex to transcriptional regulation; the repressive function may specifically involve the N-Cor repressor complex containing HDAC3, NCOR1 and NCOR2. Involved in the maintenance of embryonic stem (ES) cell identity. This is CCR4-NOT transcription complex subunit 2 (CNOT2) from Homo sapiens (Human).